A 39-amino-acid chain; its full sequence is Photosystem II reaction center protein L (39 aa).

Residues 18 to 38 (SLYLGLLLVFVLGILFSSYFF) form a helical membrane-spanning segment.

It belongs to the PsbL family. PSII is composed of 1 copy each of membrane proteins PsbA, PsbB, PsbC, PsbD, PsbE, PsbF, PsbH, PsbI, PsbJ, PsbK, PsbL, PsbM, PsbT, PsbX, PsbY, Psb30/Ycf12, peripheral proteins PsbO, CyanoQ (PsbQ), PsbU, PsbV and a large number of cofactors. It forms dimeric complexes.

The protein localises to the cellular thylakoid membrane. One of the components of the core complex of photosystem II (PSII). PSII is a light-driven water:plastoquinone oxidoreductase that uses light energy to abstract electrons from H(2)O, generating O(2) and a proton gradient subsequently used for ATP formation. It consists of a core antenna complex that captures photons, and an electron transfer chain that converts photonic excitation into a charge separation. This subunit is found at the monomer-monomer interface and is required for correct PSII assembly and/or dimerization. The protein is Photosystem II reaction center protein L of Prochlorococcus marinus (strain SARG / CCMP1375 / SS120).